The chain runs to 657 residues: Acetyl-coenzyme A synthetase (657 aa).

CoA-binding positions include 192–195 and T311; that span reads RRGK. Residues 387 to 389, 411 to 416, D504, R519, and R530 each bind ATP; these read GEP and DTWWQT. 2 residues coordinate Mg(2+): H543 and V546. Position 592 (R592) interacts with CoA. An N6-acetyllysine modification is found at K617.

This sequence belongs to the ATP-dependent AMP-binding enzyme family. The cofactor is Mg(2+). In terms of processing, acetylated. Deacetylation by the SIR2-homolog deacetylase activates the enzyme.

It carries out the reaction acetate + ATP + CoA = acetyl-CoA + AMP + diphosphate. Its function is as follows. Catalyzes the conversion of acetate into acetyl-CoA (AcCoA), an essential intermediate at the junction of anabolic and catabolic pathways. AcsA undergoes a two-step reaction. In the first half reaction, AcsA combines acetate with ATP to form acetyl-adenylate (AcAMP) intermediate. In the second half reaction, it can then transfer the acetyl group from AcAMP to the sulfhydryl group of CoA, forming the product AcCoA. The protein is Acetyl-coenzyme A synthetase of Campylobacter jejuni subsp. jejuni serotype O:2 (strain ATCC 700819 / NCTC 11168).